The sequence spans 401 residues: Methyltransferase cfoC (401 aa).

Aspartate 268 is an S-adenosyl-L-methionine binding site. Histidine 308 serves as the catalytic Proton acceptor.

It belongs to the class I-like SAM-binding methyltransferase superfamily. Cation-independent O-methyltransferase family.

It participates in secondary metabolite biosynthesis; flavonoid biosynthesis. Its function is as follows. Methyltransferase; part of the gene cluster that mediates the biosynthesis of chlorflavonin, a fungal flavonoid with acetolactate synthase inhibitory activity. Within the pathway, cfoC is responsible for the methylation at position C8-OH of flavonoid. The pathway begins with the PKS-NRPS hybrid synthetase cfoA that uses benzoic acid or p-hydroxybenzoic acid as a starter unit with four rounds of chain elongation using malonyl-CoA to form the chalcone skeleton. Then, a new type of chalcone isomerase, cfoK, catalyzes the conversion of the chalcone into a flavanone by a histidine-mediated oxa-Michael addition mechanism. The desaturation of flavanone to flavone is catalyzed by a new type of flavone synthase, the flavin mononucleotide (FMN)-dependent oxidoreductase cfoJ. Monooxygenases cfoF, cfoG, and P450 cfoH are responsible for the hydroxylation of the flavonoid skeleton at sites C3, C8, and C2', respectively. Like cfoF, the dehydratase cfoI also plays a role in the hydroxylation of position C3. Methyltransferases cfoB, cfoC, and cfoD then catalyze the methylation of C7-OH, C8-OH, and C3-OH, respectively. Finally, the monooxygenase cfoE is responsible for the chlorination of flavonoid at position C3'. This chain is Methyltransferase cfoC, found in Aspergillus candidus.